The sequence spans 208 residues: GATA transcription factor 20 (208 aa).

A GATA-type zinc finger spans residues 94–119 (CASCDTTSTPLWRNGPKGPKSLCNAC).

This sequence belongs to the type IV zinc-finger family. Class B subfamily.

Its subcellular location is the nucleus. In terms of biological role, transcriptional regulator that specifically binds 5'-GATA-3' or 5'-GAT-3' motifs within gene promoters. This chain is GATA transcription factor 20, found in Arabidopsis thaliana (Mouse-ear cress).